The primary structure comprises 132 residues: Small ribosomal subunit protein uS8 (132 aa).

It belongs to the universal ribosomal protein uS8 family. In terms of assembly, part of the 30S ribosomal subunit. Contacts proteins S5 and S12.

Its function is as follows. One of the primary rRNA binding proteins, it binds directly to 16S rRNA central domain where it helps coordinate assembly of the platform of the 30S subunit. This chain is Small ribosomal subunit protein uS8, found in Maricaulis maris (strain MCS10) (Caulobacter maris).